A 196-amino-acid chain; its full sequence is UPF0200 protein MK0400 (196 aa).

7–14 (GMPGAGKG) contributes to the ATP binding site.

It belongs to the UPF0200 family.

The sequence is that of UPF0200 protein MK0400 from Methanopyrus kandleri (strain AV19 / DSM 6324 / JCM 9639 / NBRC 100938).